The following is an 85-amino-acid chain: Small ribosomal subunit protein bS20 (85 aa).

Residues 1-24 (MANIKSAIKRAKLSEERRSHNASI) are disordered.

It belongs to the bacterial ribosomal protein bS20 family.

Functionally, binds directly to 16S ribosomal RNA. In Bacillus mycoides (strain KBAB4) (Bacillus weihenstephanensis), this protein is Small ribosomal subunit protein bS20.